Reading from the N-terminus, the 146-residue chain is D-aminoacyl-tRNA deacylase (146 aa).

The Gly-cisPro motif, important for rejection of L-amino acids motif lies at 137 to 138; it reads GP.

Belongs to the DTD family. As to quaternary structure, homodimer.

The protein resides in the cytoplasm. It carries out the reaction glycyl-tRNA(Ala) + H2O = tRNA(Ala) + glycine + H(+). The catalysed reaction is a D-aminoacyl-tRNA + H2O = a tRNA + a D-alpha-amino acid + H(+). Its function is as follows. An aminoacyl-tRNA editing enzyme that deacylates mischarged D-aminoacyl-tRNAs. Also deacylates mischarged glycyl-tRNA(Ala), protecting cells against glycine mischarging by AlaRS. Acts via tRNA-based rather than protein-based catalysis; rejects L-amino acids rather than detecting D-amino acids in the active site. By recycling D-aminoacyl-tRNA to D-amino acids and free tRNA molecules, this enzyme counteracts the toxicity associated with the formation of D-aminoacyl-tRNA entities in vivo and helps enforce protein L-homochirality. This Halalkalibacterium halodurans (strain ATCC BAA-125 / DSM 18197 / FERM 7344 / JCM 9153 / C-125) (Bacillus halodurans) protein is D-aminoacyl-tRNA deacylase.